The following is a 431-amino-acid chain: Serine hydroxymethyltransferase (431 aa).

Residues L128 and 132–134 each bind (6S)-5,6,7,8-tetrahydrofolate; that span reads GHL. Position 237 is an N6-(pyridoxal phosphate)lysine (K237).

The protein belongs to the SHMT family. Homodimer. It depends on pyridoxal 5'-phosphate as a cofactor.

It is found in the cytoplasm. It catalyses the reaction (6R)-5,10-methylene-5,6,7,8-tetrahydrofolate + glycine + H2O = (6S)-5,6,7,8-tetrahydrofolate + L-serine. The protein operates within one-carbon metabolism; tetrahydrofolate interconversion. Its pathway is amino-acid biosynthesis; glycine biosynthesis; glycine from L-serine: step 1/1. Its function is as follows. Catalyzes the reversible interconversion of serine and glycine with tetrahydrofolate (THF) serving as the one-carbon carrier. This reaction serves as the major source of one-carbon groups required for the biosynthesis of purines, thymidylate, methionine, and other important biomolecules. Also exhibits THF-independent aldolase activity toward beta-hydroxyamino acids, producing glycine and aldehydes, via a retro-aldol mechanism. The sequence is that of Serine hydroxymethyltransferase from Ruegeria pomeroyi (strain ATCC 700808 / DSM 15171 / DSS-3) (Silicibacter pomeroyi).